The following is a 146-amino-acid chain: uncharacterized protein (146 aa).

Residues 7-146 (LQINYKTDEL…EGHDILIWNP (140 aa)) form the N-acetyltransferase domain.

This is an uncharacterized protein from Staphylococcus epidermidis (strain ATCC 35984 / DSM 28319 / BCRC 17069 / CCUG 31568 / BM 3577 / RP62A).